Consider the following 207-residue polypeptide: uncharacterized protein (207 aa).

A helical membrane pass occupies residues 177-197 (LILAIGFIIGILLPTFFILLG).

It is found in the membrane. This is an uncharacterized protein from Haemophilus influenzae (strain ATCC 51907 / DSM 11121 / KW20 / Rd).